The sequence spans 192 residues: Peptidyl-tRNA hydrolase (192 aa).

His19 serves as the catalytic Proton acceptor. Residues Tyr64, Asn66, and Asn112 each coordinate tRNA.

It belongs to the PTH family. In terms of assembly, monomer.

The protein resides in the cytoplasm. It carries out the reaction an N-acyl-L-alpha-aminoacyl-tRNA + H2O = an N-acyl-L-amino acid + a tRNA + H(+). In terms of biological role, hydrolyzes ribosome-free peptidyl-tRNAs (with 1 or more amino acids incorporated), which drop off the ribosome during protein synthesis, or as a result of ribosome stalling. Its function is as follows. Catalyzes the release of premature peptidyl moieties from peptidyl-tRNA molecules trapped in stalled 50S ribosomal subunits, and thus maintains levels of free tRNAs and 50S ribosomes. In Acidiphilium cryptum (strain JF-5), this protein is Peptidyl-tRNA hydrolase.